The sequence spans 349 residues: MLGLGTLFLLLAACPASRADPVPALPDIQVQENFNESRIYGKWFNLAVGSTCPWLSRIKNKMSMSTLVLREGATGAEISTTSTRWRRGVCEEVSGTYEKTDMDGKFLYHKSKWNVTLESYVVHTNYDEYAIFLTKKFSRHHGPTITAKLYGREPQLRDSLLQEFREVALSVGIPENSIVFMEDRGECVPGDLEQKSTSLLRARRAVLPQENEGSGTGPLVTDVLKKEDSCQLSYSEGPCLGMIEKYYYNGASMACETFHYGGCLGNGNNFNSEKECLQTCRTVAACSLPIVQGPCRAYVELWAFDAAQGKCVQFSYGGCKGNGNKFYSEKECKEYCGVPGDGYEELTRS.

Positions 1–19 are cleaved as a signal peptide; it reads MLGLGTLFLLLAACPASRA. Asn-35 carries N-linked (GlcNAc...) asparagine glycosylation. 3-hydroxy-L-kynurenine-binding residues include Cys-52 and Lys-110. A disulfide bridge connects residues Cys-90 and Cys-187. N-linked (GlcNAc...) asparagine glycosylation occurs at Asn-114. Positions 136 and 148 each coordinate 3-hydroxy-L-kynurenine. O-linked (Xyl...) (chondroitin sulfate) serine glycosylation is present at Ser-214. Disulfide bonds link Cys-230–Cys-280, Cys-239–Cys-263, Cys-255–Cys-276, Cys-286–Cys-336, Cys-295–Cys-319, and Cys-311–Cys-332. BPTI/Kunitz inhibitor domains are found at residues 230–280 and 286–336; these read CQLS…LQTC and CSLP…KEYC.

In the N-terminal section; belongs to the calycin superfamily. Lipocalin family. Monomer. Homodimer. In plasma, it occurs as a monomer or dimer and in covalently-linked complexes with immunoglobulin A (IgA), ALB/albumin and F2/prothrombin. Chromophore-bound alpha-1-microglobulin interacts with the constant region of immunoglobulin A. Chromophore-bound alpha-1-microglobulin interacts with ALB with molar ratio 2:1 and 1:1; this interaction does not prevent fatty acid binding to ALB. Interacts with F2/prothrombin (via N-terminus) with molar ratio 2:1 and 1:1; this interaction does not prevent the activation of prothrombin to thrombin. Interacts with NDUFAB1, a subunit of mitochondrial complex I. Interacts with FN1. As to quaternary structure, I-alpha-I plasma protease inhibitors are assembled from one or two heavy chains (HC) and one light chain, bikunin. Inter-alpha-inhibitor (I-alpha-I) is composed of ITIH1/HC1, ITIH2/HC2 and bikunin, and pre-alpha-inhibitor (P-alpha-I) of ITIH3/HC3 and bikunin. Interacts with TNFAIP6 (via Link domain). In terms of assembly, monomer. Also occurs as a complex with tryptase in mast cells. The precursor is proteolytically processed into separately functioning proteins. Post-translationally, 3-hydroxykynurenine, an oxidized tryptophan metabolite that is common in biological fluids, reacts with Cys-53, Lys-111, Lys-137, and Lys-149 to form heterogeneous polycyclic chromophores including hydroxanthommatin. The reaction by alpha-1-microglobulin is autocatalytic; the human protein forms chromophore even when expressed in insect and bacterial cells. The chromophore can react with accessible cysteines forming non-reducible thioether cross-links with other molecules of alpha-1-microglobulin or with other proteins such as Ig alpha-1 chain C region 'Cys-352'. In terms of processing, heavy chains are interlinked with bikunin via a chondroitin 4-sulfate bridge to the C-terminal aspartate. Proteolytically cleaved by PRSS3 at Kunitz domain 2. In terms of tissue distribution, expressed by the liver and secreted in plasma.

The protein resides in the secreted. It is found in the endoplasmic reticulum. Its subcellular location is the cytoplasm. The protein localises to the cytosol. It localises to the cell membrane. The protein resides in the nucleus membrane. It is found in the mitochondrion inner membrane. Its subcellular location is the extracellular space. The protein localises to the extracellular matrix. Functionally, antioxidant and tissue repair protein with reductase, heme-binding and radical-scavenging activities. Removes and protects against harmful oxidants and repairs macromolecules in intravascular and extravascular spaces and in intracellular compartments. Intravascularly, plays a regulatory role in red cell homeostasis by preventing heme- and reactive oxygen species-induced cell damage. Binds and degrades free heme to protect fetal and adult red blood cells from hemolysis. Reduces extracellular methemoglobin, a Fe3+ (ferric) form of hemoglobin that cannot bind oxygen, back to the Fe2+ (ferrous) form deoxyhemoglobin, which has oxygen-carrying potential. Upon acute inflammation, inhibits oxidation of low-density lipoprotein particles by MPO and limits vascular damage. Extravascularly, protects from oxidation products formed on extracellular matrix structures and cell membranes. Catalyzes the reduction of carbonyl groups on oxidized collagen fibers and preserves cellular and extracellular matrix ultrastructures. Importantly, counteracts the oxidative damage at blood-placenta interface, preventing leakage of free fetal hemoglobin into the maternal circulation. Intracellularly, has a role in maintaining mitochondrial redox homeostasis. Bound to complex I of the respiratory chain of mitochondria, may scavenge free radicals and preserve mitochondrial ATP synthesis. Protects renal tubule epithelial cells from heme-induced oxidative damage to mitochondria. Reduces cytochrome c from Fe3+ (ferric) to the Fe2+ (ferrous) state through formation of superoxide anion radicals in the presence of ascorbate or NADH/NADPH electron donor cofactors, ascorbate being the preferred cofactor. Has a chaperone role in facilitating the correct folding of bikunin in the endoplasmic reticulum compartment. In terms of biological role, kunitz-type serine protease inhibitor and structural component of extracellular matrix with a role in extracellular space remodeling and cell adhesion. Among others, has antiprotease activity toward kallikrein, a protease involved in airway inflammation; inhibits GZMK/granzyme, a granule-stored serine protease involved in NK and T cell cytotoxic responses; and inhibits PLG/plasmin, a protease required for activation of matrix metalloproteinases. As part of I-alpha-I complex, provides for the heavy chains to be transferred from I-alpha-I complex to hyaluronan in the presence of TNFAIP6, in a dynamic process that releases free bikunin and remodels extracellular matrix proteoglycan structures. Free bikunin, but not its heavy chain-bound form, acts as a potent protease inhibitor in airway secretions. Part of hyaluronan-rich extracellular matrix that surrounds oocyte during cumulus oophorus expansion, an indispensable process for proper ovulation. Also inhibits calcium oxalate crystallization. Kunitz-type serine protease inhibitor. Has high catalytic efficiency for F10/blood coagulation factor Xa and may act as an anticoagulant by inhibiting prothrombin activation. Inhibits trypsin and mast cell CMA1/chymase and tryptase proteases. This Mesocricetus auratus (Golden hamster) protein is Protein AMBP (AMBP).